A 416-amino-acid chain; its full sequence is UDP-N-acetylglucosamine 1-carboxyvinyltransferase (416 aa).

22–23 (KN) is a phosphoenolpyruvate binding site. Arginine 91 is a binding site for UDP-N-acetyl-alpha-D-glucosamine. Residue cysteine 115 is the Proton donor of the active site. The residue at position 115 (cysteine 115) is a 2-(S-cysteinyl)pyruvic acid O-phosphothioketal. Residues 120 to 124 (RPIDL), aspartate 305, and isoleucine 327 each bind UDP-N-acetyl-alpha-D-glucosamine.

The protein belongs to the EPSP synthase family. MurA subfamily.

It is found in the cytoplasm. The enzyme catalyses phosphoenolpyruvate + UDP-N-acetyl-alpha-D-glucosamine = UDP-N-acetyl-3-O-(1-carboxyvinyl)-alpha-D-glucosamine + phosphate. It functions in the pathway cell wall biogenesis; peptidoglycan biosynthesis. Cell wall formation. Adds enolpyruvyl to UDP-N-acetylglucosamine. This Buchnera aphidicola subsp. Acyrthosiphon pisum (strain Tuc7) protein is UDP-N-acetylglucosamine 1-carboxyvinyltransferase.